The chain runs to 273 residues: Type II methyltransferase M2.MboI (273 aa).

This sequence belongs to the N(4)/N(6)-methyltransferase family.

It carries out the reaction a 2'-deoxyadenosine in DNA + S-adenosyl-L-methionine = an N(6)-methyl-2'-deoxyadenosine in DNA + S-adenosyl-L-homocysteine + H(+). In terms of biological role, a beta subtype methylase that recognizes the double-stranded sequence 5'-GATC-3', methylates A-2 on both strands, and protects the DNA from cleavage by the MboI endonuclease. This seems to be a weaker methylase than M1.MboI. The polypeptide is Type II methyltransferase M2.MboI (mboIBM) (Moraxella bovis).